The sequence spans 306 residues: Non-specific ribonucleoside hydrolase RihC (306 aa).

H235 is a catalytic residue.

Belongs to the IUNH family. RihC subfamily.

In terms of biological role, hydrolyzes both purine and pyrimidine ribonucleosides with a broad-substrate specificity. The polypeptide is Non-specific ribonucleoside hydrolase RihC (Salmonella dublin (strain CT_02021853)).